The sequence spans 80 residues: Protein P9 (80 aa).

Self-associates.

The sequence is that of Protein P9 from Beta vulgaris (Sugar beet).